Here is a 120-residue protein sequence, read N- to C-terminus: cAMP-responsive element-binding protein-like 2 (120 aa).

The tract at residues 1–24 is disordered; the sequence is MDDSKVVGGKVKKPGKRGRKPAKI. Basic residues predominate over residues 10–21; the sequence is KVKKPGKRGRKP. The region spanning 23 to 86 is the bZIP domain; that stretch reads KIDLKAKLER…MAMDQGKIPS (64 aa). The tract at residues 29–60 is basic motif; sequence KLERSRQSARECRARKKLRYQYLEELVSSRER. Positions 62-69 are leucine-zipper; it reads ICALREEL. Positions 93–120 are disordered; sequence TGEEQSKSQQNSSRHMKAGKTDANSNSW.

Belongs to the bZIP family. ATF subfamily. As to quaternary structure, interacts with CREB1; regulates CREB1 phosphorylation, stability and transcriptional activity. Interacts with immediate-early (IE) protein BICP22 of bovine herpesvirus-1 (BHV-1). Phosphorylated by AMPK.

The protein localises to the nucleus. In terms of biological role, probable regulator of CREB1 transcriptional activity which is involved in adipose cells differentiation. May also play a regulatory role in the cell cycle. The sequence is that of cAMP-responsive element-binding protein-like 2 (CREBL2) from Bos taurus (Bovine).